Reading from the N-terminus, the 212-residue chain is Lipid A acyltransferase PagP (212 aa).

The first 24 residues, 1 to 24 (MYLKRTLITLSLITLPIVPFLSYA), serve as a signal peptide directing secretion. Positions 36–47 (NLAPVTVDSSDP) are enriched in polar residues. The segment at 36-56 (NLAPVTVDSSDPVSDKQGESW) is disordered. Active-site residues include His84, Asp127, and Ser128.

Belongs to the lipid A palmitoyltransferase family. Homodimer.

It is found in the cell outer membrane. The enzyme catalyses a lipid A + a 1,2-diacyl-sn-glycero-3-phosphocholine = a hepta-acyl lipid A + a 2-acyl-sn-glycero-3-phosphocholine. It catalyses the reaction a lipid IVA + a 1,2-diacyl-sn-glycero-3-phosphocholine = a lipid IVB + a 2-acyl-sn-glycero-3-phosphocholine. It carries out the reaction a lipid IIA + a 1,2-diacyl-sn-glycero-3-phosphocholine = a lipid IIB + a 2-acyl-sn-glycero-3-phosphocholine. Transfers a fatty acid residue from the sn-1 position of a phospholipid to the N-linked hydroxyfatty acid chain on the proximal unit of lipid A or its precursors. The polypeptide is Lipid A acyltransferase PagP (Pectobacterium carotovorum subsp. carotovorum (strain PC1)).